The sequence spans 102 residues: NADH-quinone oxidoreductase subunit K 1 (102 aa).

Helical transmembrane passes span Leu-5–Ala-25, Val-30–Gly-50, and Val-62–Val-82.

The protein belongs to the complex I subunit 4L family. NDH-1 is composed of 14 different subunits. Subunits NuoA, H, J, K, L, M, N constitute the membrane sector of the complex.

It localises to the cell inner membrane. The enzyme catalyses a quinone + NADH + 5 H(+)(in) = a quinol + NAD(+) + 4 H(+)(out). Its function is as follows. NDH-1 shuttles electrons from NADH, via FMN and iron-sulfur (Fe-S) centers, to quinones in the respiratory chain. The immediate electron acceptor for the enzyme in this species is believed to be ubiquinone. Couples the redox reaction to proton translocation (for every two electrons transferred, four hydrogen ions are translocated across the cytoplasmic membrane), and thus conserves the redox energy in a proton gradient. This chain is NADH-quinone oxidoreductase subunit K 1, found in Geobacter sp. (strain M21).